Consider the following 352-residue polypeptide: Protein-glutamate methylesterase/protein-glutamine glutaminase 2 (352 aa).

The 116-residue stretch at 1–116 (MVVDDSAVVR…KQFLTDSADE (116 aa)) folds into the Response regulatory domain. Residue aspartate 50 is modified to 4-aspartylphosphate. The CheB-type methylesterase domain occupies 162–352 (AQTTERIVAI…MAREIVTQLQ (191 aa)). Active-site residues include serine 174, histidine 200, and aspartate 296.

Belongs to the CheB family. Post-translationally, phosphorylated by CheA. Phosphorylation of the N-terminal regulatory domain activates the methylesterase activity.

It localises to the cytoplasm. It carries out the reaction [protein]-L-glutamate 5-O-methyl ester + H2O = L-glutamyl-[protein] + methanol + H(+). The enzyme catalyses L-glutaminyl-[protein] + H2O = L-glutamyl-[protein] + NH4(+). Functionally, involved in chemotaxis. Part of a chemotaxis signal transduction system that modulates chemotaxis in response to various stimuli. Catalyzes the demethylation of specific methylglutamate residues introduced into the chemoreceptors (methyl-accepting chemotaxis proteins or MCP) by CheR. Also mediates the irreversible deamidation of specific glutamine residues to glutamic acid. The protein is Protein-glutamate methylesterase/protein-glutamine glutaminase 2 of Xanthomonas campestris pv. campestris (strain ATCC 33913 / DSM 3586 / NCPPB 528 / LMG 568 / P 25).